A 354-amino-acid polypeptide reads, in one-letter code: Replication factor C subunit 5 (354 aa).

ATP is bound by residues Val5, Ser17, 43 to 51 (GPNGTGKKT), and Arg231.

The protein belongs to the activator 1 small subunits family. In terms of assembly, replication factor C (RFC) is a heteropentamer of subunits RFC1, RFC2, RFC3, RFC4 and RFC5 and forms a complex with POL30/PCNA in the presence of ATP. Component of the RAD24-RFC complex which consists of RAD24, RFC2, RFC3, RFC4 and RFC5 and associates with the checkpoint clamp DDC1:MEC3:RAD17 complex. Component of the ELG1-RFC complex which consists of ELG1, RFC2, RFC3, RFC4 and RFC5. Component of the CTF18-RFC complex, which consists of CTF18, CTF8, DCC1, RFC2, RFC3, RFC4 and RFC5. RFC5 interacts with ECO1.

Its subcellular location is the nucleus. Functionally, component of ATP-dependent clamp loader (RFC and RFC-like) complexes for DNA clamps, such as the POL30/PCNA homotrimer and the checkpoint clamp DDC1:MEC3:RAD17 complex. During a clamp loading circle, the RFC:clamp complex binds to DNA and the recognition of the double-stranded/single-stranded junction stimulates ATP hydrolysis by RFC. The complex presumably provides bipartite ATP sites in which one subunit supplies a catalytic site for hydrolysis of ATP bound to the neighboring subunit. Dissociation of RFC from the clamp leaves the clamp encircling DNA. Component of the replication factor C (RFC or activator 1) complex which loads POL30/PCNA and acts during elongation of primed DNA templates by DNA polymerase delta and epsilon. RFC has an essential but redundant activity in sister chromatid cohesion establishment. Component of the RFC-like complex CTF18-RFC which is required for efficient establishment of chromosome cohesion during S-phase and may load or unload POL30/PCNA. Component of the RFC-like RAD24-RFC complex which loads the checkpoint clamp DDC1:MEC3:RAD17 complex and is involved in DNA repair pathways. Component of the RFC-like ELG1-RFC complex which appears to have a role in DNA replication, replication fork re-start, recombination and repair. This Saccharomyces cerevisiae (strain ATCC 204508 / S288c) (Baker's yeast) protein is Replication factor C subunit 5 (RFC5).